Here is a 334-residue protein sequence, read N- to C-terminus: Ornithine carbamoyltransferase (334 aa).

Carbamoyl phosphate is bound by residues 56-59 (STRT), Q83, R107, and 134-137 (HPTQ). Residues N168, D232, and 236-237 (SM) contribute to the L-ornithine site. Carbamoyl phosphate-binding positions include 274 to 275 (CL) and R320.

It belongs to the aspartate/ornithine carbamoyltransferase superfamily. OTCase family.

Its subcellular location is the cytoplasm. The enzyme catalyses carbamoyl phosphate + L-ornithine = L-citrulline + phosphate + H(+). It participates in amino-acid biosynthesis; L-arginine biosynthesis; L-arginine from L-ornithine and carbamoyl phosphate: step 1/3. Functionally, reversibly catalyzes the transfer of the carbamoyl group from carbamoyl phosphate (CP) to the N(epsilon) atom of ornithine (ORN) to produce L-citrulline. The protein is Ornithine carbamoyltransferase of Escherichia coli O45:K1 (strain S88 / ExPEC).